An 84-amino-acid chain; its full sequence is Putative membrane protein insertion efficiency factor (84 aa).

It belongs to the UPF0161 family.

It localises to the cell inner membrane. In terms of biological role, could be involved in insertion of integral membrane proteins into the membrane. The sequence is that of Putative membrane protein insertion efficiency factor from Shewanella sp. (strain ANA-3).